The primary structure comprises 343 residues: DNA polymerase III subunit delta (343 aa).

3 domain regions span residues 1–140 (MIRL…VTCQ), 141–210 (TPEQ…NDAA), and 211–343 (HFTP…FIDG).

It belongs to the DNA polymerase HolA subunit family. The DNA polymerase III holoenzyme complex contains at least 10 different subunits organized into 3 functionally essential subassemblies: the Pol III core, the beta sliding clamp processivity factor and the clamp-loading complex. The Pol III core (subunits alpha, epsilon and theta) contains the polymerase and the 3'-5' exonuclease proofreading activities. The polymerase is tethered to the template via the dimeric beta sliding clamp processivity factor. The clamp-loading complex (also called gamma complex) assembles the beta sliding clamp onto the primed template and plays a central role in the organization and communication at the replication fork. The clamp-loading complex contains delta, delta', psi and chi, and 3 copies of either or both of two different DnaX proteins, gamma and tau. The DNA replisome complex has a single clamp loader (3 tau and 1 each of delta, delta', psi and chi subunits) which binds 3 Pol III cores (1 core on the leading strand and 2 on the lagging strand) each with a beta sliding clamp dimer. Additional proteins in the replisome are other copies of gamma, psi and chi, Ssb, DNA helicase and RNA primase. The clamp loader hydrolyzes ATP to assemble the beta processivity factor onto the primed template and plays a central role in the organization and communication at the replication fork; the minimal complex to load the beta sliding clamp on DNA is delta, delta', gamma.

It catalyses the reaction DNA(n) + a 2'-deoxyribonucleoside 5'-triphosphate = DNA(n+1) + diphosphate. Part of the beta sliding clamp loading complex, which hydrolyzes ATP to load the beta clamp onto primed DNA to form the DNA replication pre-initiation complex. DNA polymerase III is a complex, multichain enzyme responsible for most of the replicative synthesis in bacteria. This DNA polymerase also exhibits 3'-5' exonuclease activity. The delta subunit is the wrench that will open the beta subunit dimer, which has been modeled to leave a gap large enough for ssDNA to pass through. The gamma complex (gamma(3),delta,delta') is thought to load beta dimers onto DNA by binding ATP which alters the complex's conformation so it can bind beta sliding clamp dimers and open them at one interface. Primed DNA is recognized, ATP is hydrolyzed releasing the gamma complex and closing the beta sliding clamp ring around the primed DNA. The protein is DNA polymerase III subunit delta (holA) of Escherichia coli (strain K12).